The chain runs to 99 residues: Nucleoid-associated protein SpyM3_1606 (99 aa).

The protein belongs to the YbaB/EbfC family. In terms of assembly, homodimer.

The protein resides in the cytoplasm. Its subcellular location is the nucleoid. Binds to DNA and alters its conformation. May be involved in regulation of gene expression, nucleoid organization and DNA protection. This is Nucleoid-associated protein SpyM3_1606 from Streptococcus pyogenes serotype M3 (strain ATCC BAA-595 / MGAS315).